Reading from the N-terminus, the 325-residue chain is Cyclic AMP-responsive element-binding protein 1 (325 aa).

2 stretches are compositionally biased toward polar residues: residues 1–11 (MESGAENQQSG) and 18–27 (AESQQMTVQA). Disordered stretches follow at residues 1–27 (MESGAENQQSGDAAVTEAESQQMTVQA) and 92–111 (SEDSQESVDSVTDSQKRREI). A KID domain is found at 85 to 144 (QISTIAESEDSQESVDSVTDSQKRREILSRRPSYRKILNDLSSDAPGVPRIEEEKSEEET). Ser117 bears the Phosphoserine; by CaMK1, CaMK2, CaMK4, PKB/AKT1 or PKB/AKT2, RPS6KA3, RPS6KA4, RPS6KA5 and SGK1 mark. Lys120 participates in a covalent cross-link: Glycyl lysine isopeptide (Lys-Gly) (interchain with G-Cter in SUMO2). The tract at residues 124–146 (DLSSDAPGVPRIEEEKSEEETSA) is disordered. Ser126 carries the phosphoserine; by CaMK2 modification. Phosphoserine; by HIPK2 is present on Ser255. The 59-residue stretch at 267–325 (ARKREVRLMKNREAARECRRKKKEYVKCLENRVAVLENQNKTLIEELKALKDLYCHKSD) folds into the bZIP domain. Residues 268–293 (RKREVRLMKNREAARECRRKKKEYVK) are basic motif. Glycyl lysine isopeptide (Lys-Gly) (interchain with G-Cter in SUMO1) cross-links involve residues Lys269 and Lys288. A leucine-zipper region spans residues 295-316 (LENRVAVLENQNKTLIEELKAL).

The protein belongs to the bZIP family. In terms of assembly, interacts with PPRC1. Binds DNA as a dimer. This dimer is stabilized by magnesium ions. Interacts, through the bZIP domain, with the coactivators CRTC1/TORC1, CRTC2/TORC2 and CRTC3/TORC3. When phosphorylated on Ser-117, binds CREBBP. Interacts with CREBL2; regulates CREB1 phosphorylation, stability and transcriptional activity. Interacts (phosphorylated form) with TOX3. Interacts with ARRB1. Binds to HIPK2. Interacts with SGK1. Interacts with TSSK4; this interaction facilitates phosphorylation on Ser-117. Forms a complex with KMT2A and CREBBP. Interacts with TOX4; CREB1 is required for full induction of TOX4-dependent activity and the interaction is increased by cAMP and inhibited by insulin. Post-translationally, sumoylated with SUMO1. Sumoylation on Lys-288, but not on Lys-269, is required for nuclear localization of this protein. Sumoylation is enhanced under hypoxia, promoting nuclear localization and stabilization. Stimulated by phosphorylation. Phosphorylation of both Ser-117 and Ser-126 in the SCN regulates the activity of CREB and participates in circadian rhythm generation. Phosphorylation of Ser-117 allows CREBBP binding. Phosphorylated upon calcium influx by CaMK4 and CaMK2 on Ser-117. CaMK4 is much more potent than CaMK2 in activating CREB. Phosphorylated by CaMK2 on Ser-126. Phosphorylation of Ser-126 blocks CREB-mediated transcription even when Ser-117 is phosphorylated. Phosphorylated by CaMK1. Phosphorylation of Ser-255 by HIPK2 in response to genotoxic stress promotes CREB1 activity, facilitating the recruitment of the coactivator CBP. Phosphorylated at Ser-117 by RPS6KA3, RPS6KA4 and RPS6KA5 in response to mitogenic or stress stimuli. CREBL2 positively regulates phosphorylation at Ser-117 thereby stimulating CREB1 transcriptional activity. In liver, phosphorylation is induced by fasting or glucagon in a circadian fashion. Phosphorylated by TSSK4 on Ser-117.

Its subcellular location is the nucleus. Its function is as follows. Phosphorylation-dependent transcription factor that stimulates transcription upon binding to the DNA cAMP response element (CRE), a sequence present in many viral and cellular promoters. Transcription activation is enhanced by the TORC coactivators which act independently of Ser-117 phosphorylation. Involved in different cellular processes including the synchronization of circadian rhythmicity and the differentiation of adipose cells. Regulates the expression of apoptotic and inflammatory response factors in cardiomyocytes in response to ERFE-mediated activation of AKT signaling. The sequence is that of Cyclic AMP-responsive element-binding protein 1 (CREB1) from Bos taurus (Bovine).